The chain runs to 351 residues: UDP-N-acetylglucosamine--N-acetylmuramyl-(pentapeptide) pyrophosphoryl-undecaprenol N-acetylglucosamine transferase (351 aa).

UDP-N-acetyl-alpha-D-glucosamine is bound by residues 13-15 (TGG), asparagine 125, arginine 161, serine 189, isoleucine 241, 260-265 (ALTVCE), and glutamine 285.

This sequence belongs to the glycosyltransferase 28 family. MurG subfamily.

Its subcellular location is the cell inner membrane. It carries out the reaction di-trans,octa-cis-undecaprenyl diphospho-N-acetyl-alpha-D-muramoyl-L-alanyl-D-glutamyl-meso-2,6-diaminopimeloyl-D-alanyl-D-alanine + UDP-N-acetyl-alpha-D-glucosamine = di-trans,octa-cis-undecaprenyl diphospho-[N-acetyl-alpha-D-glucosaminyl-(1-&gt;4)]-N-acetyl-alpha-D-muramoyl-L-alanyl-D-glutamyl-meso-2,6-diaminopimeloyl-D-alanyl-D-alanine + UDP + H(+). Its pathway is cell wall biogenesis; peptidoglycan biosynthesis. Functionally, cell wall formation. Catalyzes the transfer of a GlcNAc subunit on undecaprenyl-pyrophosphoryl-MurNAc-pentapeptide (lipid intermediate I) to form undecaprenyl-pyrophosphoryl-MurNAc-(pentapeptide)GlcNAc (lipid intermediate II). This is UDP-N-acetylglucosamine--N-acetylmuramyl-(pentapeptide) pyrophosphoryl-undecaprenol N-acetylglucosamine transferase from Haemophilus influenzae (strain PittGG).